Here is a 94-residue protein sequence, read N- to C-terminus: MASLKKSLFLVLFLGLVSLSICEEEKRENEEDAEDENHEEESEEKRGLLDFAKHVIGIASKLGKRSEEKRFWPFMGKRSEEKRFWPFMGKRSEE.

Positions 1-22 (MASLKKSLFLVLFLGLVSLSIC) are cleaved as a signal peptide. The propeptide occupies 23 to 46 (EEEKRENEEDAEDENHEEESEEKR). Positions 27 to 46 (RENEEDAEDENHEEESEEKR) are disordered. The segment covering 30–42 (EEDAEDENHEEES) has biased composition (acidic residues). Leu-62 carries the post-translational modification Leucine amide. The propeptide occupies 66 to 70 (SEEKR). Met-75 carries the methionine amide modification. The propeptide occupies 79–83 (SEEKR). Met-88 is modified (methionine amide). Positions 92 to 94 (SEE) are excised as a propeptide.

This sequence belongs to the frog skin active peptide (FSAP) family. Brevinin subfamily. In terms of tissue distribution, expressed by the skin glands.

The protein resides in the secreted. Fallaxidin-1.3 shows no antibacterial activity against Gram-positive or Gram-negative bacteria. Does not inhibit the formation of NO by neuronal nitric oxide synthase. Has no effect on splenocyte proliferation or smooth muscle contraction. Functionally, fallaxidin-3.2 shows antibacterial activity against the Gram-positive bacteria E.faecalis (MIC=100 uM) and L.lactis (MIC=500 uM). No antibacterial activity against the Gram-positive bacteria B.cereus, L.innocua, M.luteus, S.epidermidis, S.uberis and S.aureus, or the Gram-negative bacteria E.cloacae and E.coli. The sequence is that of Preprofallaxidin-9 from Litoria fallax (Eastern dwarf tree frog).